The primary structure comprises 492 residues: RNA-binding protein Nova-2 (492 aa).

The short motif at 10 to 26 is the Bipartite nuclear localization signal element; that stretch reads KRPLETPPEVVCTKRSN. The 68-residue stretch at 32-99 folds into the KH 1 domain; that stretch reads EYFLKVLIPS…EALNAVHSFI (68 aa). Lys-112 is covalently cross-linked (Glycyl lysine isopeptide (Lys-Gly) (interchain with G-Cter in SUMO2)). 2 KH domains span residues 130–196 and 406–473; these read AKQA…VSAI and KELV…QYLI.

Interacts with PTBP2; the interaction is direct. Brain. Expression restricted to astrocytes.

The protein localises to the nucleus. Functions to regulate alternative splicing in neurons by binding pre-mRNA in a sequence-specific manner to activate exon inclusion or exclusion. It binds specifically to the sequences 5'-YCAY-3' and regulates splicing in only a subset of regulated exons. Binding to an exonic 5'-YCAY-3' cluster changes the protein complexes assembled on pre-mRNA, blocking U1 snRNP binding and exon inclusion, whereas binding to an intronic 5'-YCAY-3' cluster enhances spliceosome assembly and exon inclusion. With NOVA1, they perform unique biological functions in different brain areas and cell types. Uniquely regulates alternative splicing events of a series of axon guidance related genes during cortical development, being essential for central nervous system development by regulating neural networks wiring. Regulates differentially alternative splicing on the same transcripts expressed in different neurons. This includes functional differences in transcripts expressed in cortical and cerebellar excitatory versus inhibitory neurons where is required for, respectively, development of laminar structure and motor coordination and synapse formation. Also the regulation the regulation of intron retention can sequester the trans-acting splicing factor PTBP2, acting as a variable cis-acting scaffolding platform for PTBP2 across various natural conditions. The protein is RNA-binding protein Nova-2 of Homo sapiens (Human).